Here is a 147-residue protein sequence, read N- to C-terminus: Hemoglobin subunit epsilon (147 aa).

Residues 3–147 enclose the Globin domain; sequence HFTAEEKAAI…VAIALGHKYH (145 aa). 2 positions are modified to phosphoserine: serine 14 and serine 51. Residues histidine 64 and histidine 93 each coordinate heme b.

This sequence belongs to the globin family. In terms of assembly, heterotetramer of two alpha chains and two epsilon chains in early embryonic hemoglobin Gower-2; two zeta chains and two epsilon chains in early embryonic hemoglobin Gower-1. Red blood cells.

Functionally, the epsilon chain is a beta-type chain of early mammalian embryonic hemoglobin. The protein is Hemoglobin subunit epsilon (HBE1) of Saimiri boliviensis boliviensis (Bolivian squirrel monkey).